A 591-amino-acid chain; its full sequence is L-fucose isomerase (591 aa).

Active-site proton acceptor residues include Glu-337 and Asp-361. The Mn(2+) site is built by Glu-337, Asp-361, and His-528.

The protein belongs to the L-fucose isomerase family. As to quaternary structure, homohexamer. Mn(2+) is required as a cofactor.

It is found in the cytoplasm. The catalysed reaction is L-fucose = L-fuculose. It participates in carbohydrate degradation; L-fucose degradation; L-lactaldehyde and glycerone phosphate from L-fucose: step 1/3. Functionally, converts the aldose L-fucose into the corresponding ketose L-fuculose. The protein is L-fucose isomerase of Salmonella arizonae (strain ATCC BAA-731 / CDC346-86 / RSK2980).